Here is a 600-residue protein sequence, read N- to C-terminus: Putative acetyltransferase MPN_114 (600 aa).

The active-site Proton acceptor is histidine 323. 396–409 (TKPLIKAKGIKNSE) contacts CoA.

It belongs to the carnitine/choline acetyltransferase family.

This chain is Putative acetyltransferase MPN_114, found in Mycoplasma pneumoniae (strain ATCC 29342 / M129 / Subtype 1) (Mycoplasmoides pneumoniae).